The following is a 313-amino-acid chain: Homoserine O-succinyltransferase (313 aa).

Cys142 (acyl-thioester intermediate) is an active-site residue. Substrate is bound by residues Lys163 and Ser192. His235 functions as the Proton acceptor in the catalytic mechanism. Residue Glu237 is part of the active site. Arg249 lines the substrate pocket.

The protein belongs to the MetA family.

Its subcellular location is the cytoplasm. The enzyme catalyses L-homoserine + succinyl-CoA = O-succinyl-L-homoserine + CoA. The protein operates within amino-acid biosynthesis; L-methionine biosynthesis via de novo pathway; O-succinyl-L-homoserine from L-homoserine: step 1/1. Its function is as follows. Transfers a succinyl group from succinyl-CoA to L-homoserine, forming succinyl-L-homoserine. In Aliivibrio fischeri (strain MJ11) (Vibrio fischeri), this protein is Homoserine O-succinyltransferase.